The chain runs to 33 residues: Protein YtiC (33 aa).

A helical transmembrane segment spans residues 10 to 29 (FDMLSIYIIYKLIVSNNTWL).

It localises to the cell inner membrane. This chain is Protein YtiC, found in Escherichia coli (strain K12).